A 210-amino-acid polypeptide reads, in one-letter code: Somatotropin (210 aa).

An N-terminal signal peptide occupies residues Met-1–Ala-22. His-38 serves as a coordination point for Zn(2+). A disulfide bridge connects residues Cys-71 and Cys-183. A Zn(2+)-binding site is contributed by Glu-192. Cys-200 and Cys-208 are joined by a disulfide.

This sequence belongs to the somatotropin/prolactin family.

The protein resides in the secreted. Growth hormone plays an important role in growth control and is involved in the regulation of several anabolic processes. Implicated as an osmoregulatory substance important for seawater adaptation. This chain is Somatotropin (gh), found in Salmo salar (Atlantic salmon).